We begin with the raw amino-acid sequence, 289 residues long: Oxaloacetate decarboxylase (289 aa).

Position 50 (serine 50) interacts with substrate. Aspartate 88 is a binding site for Mg(2+). 2 residues coordinate substrate: arginine 159 and histidine 235.

This sequence belongs to the isocitrate lyase/PEP mutase superfamily. Oxaloacetate decarboxylase family. In terms of assembly, homotetramer; dimer of dimers. The cofactor is Mg(2+).

It carries out the reaction oxaloacetate + H(+) = pyruvate + CO2. Functionally, catalyzes the decarboxylation of oxaloacetate into pyruvate. Seems to play a role in maintaining cellular concentrations of bicarbonate and pyruvate. This is Oxaloacetate decarboxylase from Pseudomonas savastanoi pv. phaseolicola (strain 1448A / Race 6) (Pseudomonas syringae pv. phaseolicola (strain 1448A / Race 6)).